Consider the following 101-residue polypeptide: Large ribosomal subunit protein bL21 (101 aa).

This sequence belongs to the bacterial ribosomal protein bL21 family. Part of the 50S ribosomal subunit. Contacts protein L20.

Its function is as follows. This protein binds to 23S rRNA in the presence of protein L20. The protein is Large ribosomal subunit protein bL21 of Corynebacterium glutamicum (strain R).